Consider the following 331-residue polypeptide: Glucan endo-1,3-beta-glucosidase, acidic isoform GL161 (331 aa).

The first 9 residues, 1-9, serve as a signal peptide directing secretion; it reads MCSIQIIGA. Glutamine 10 carries the pyrrolidone carboxylic acid modification. N-linked (GlcNAc...) asparagine glycans are attached at residues asparagine 55 and asparagine 75. Glutamate 244 acts as the Nucleophile in catalysis.

It belongs to the glycosyl hydrolase 17 family. Is expressed primarily in epidermal cell of healthy plant, and following induction by ethylene, accumulates in mesophyll cells.

It localises to the secreted. The protein localises to the extracellular space. It catalyses the reaction Hydrolysis of (1-&gt;3)-beta-D-glucosidic linkages in (1-&gt;3)-beta-D-glucans.. In terms of biological role, is thought to be an important plant defense-related product against fungal pathogens. The protein is Glucan endo-1,3-beta-glucosidase, acidic isoform GL161 of Nicotiana tabacum (Common tobacco).